We begin with the raw amino-acid sequence, 233 residues long: MEKVTAIVLAAGQGKRMKSSVSKQYMLLKDKPVLYYSLKAFENSLVTDIIVVVGNDEISYVKEEIIKPYGFRKVTHVVEGGSERYLSVLNGLNKIKDSDYVLVHDGARPLIKTNTINTVISEVEEKKACIVGVASKDTVKISTHDGIIDSTPDRNQVYTIQTPQAFEYSILREAYDNLASYQGAMITDDAMIVECLNRYPIYLVQGEYTNIKITTPEDLIFAEAILREHQDFI.

Belongs to the IspD/TarI cytidylyltransferase family. IspD subfamily.

It carries out the reaction 2-C-methyl-D-erythritol 4-phosphate + CTP + H(+) = 4-CDP-2-C-methyl-D-erythritol + diphosphate. The protein operates within isoprenoid biosynthesis; isopentenyl diphosphate biosynthesis via DXP pathway; isopentenyl diphosphate from 1-deoxy-D-xylulose 5-phosphate: step 2/6. Its function is as follows. Catalyzes the formation of 4-diphosphocytidyl-2-C-methyl-D-erythritol from CTP and 2-C-methyl-D-erythritol 4-phosphate (MEP). The polypeptide is 2-C-methyl-D-erythritol 4-phosphate cytidylyltransferase (Lachnoclostridium phytofermentans (strain ATCC 700394 / DSM 18823 / ISDg) (Clostridium phytofermentans)).